We begin with the raw amino-acid sequence, 621 residues long: E3 SUMO-protein ligase PIAS2 (621 aa).

The SAP domain maps to 11–45 (VSSFRVSELQVLLGFAGRNKSGRKHDLLMRALHLL). An LXXLL motif motif is present at residues 19–23 (LQVLL). Glycyl lysine isopeptide (Lys-Gly) (interchain with G-Cter in SUMO2) cross-links involve residues Lys-46 and Lys-249. Residues 134-299 (QPSPPIPPVH…SMSVYLVRQL (166 aa)) form the PINIT domain. Residues 331 to 412 (PDSEIATTSL…FMEILNDCSD (82 aa)) form an SP-RING-type zinc finger. Cys-362, His-364, Cys-385, and Cys-388 together coordinate Zn(2+). Residues Lys-430, Lys-435, Lys-443, and Lys-452 each participate in a glycyl lysine isopeptide (Lys-Gly) (interchain with G-Cter in SUMO2) cross-link. The interval 467 to 473 (VDVIDLT) is SUMO1-binding. 3 positions are modified to phosphoserine: Ser-476, Ser-477, and Ser-478. Positions 484-492 (PPAKRKCIF) match the Nuclear localization signal motif. Lys-489 is covalently cross-linked (Glycyl lysine isopeptide (Lys-Gly) (interchain with G-Cter in SUMO2)). Phosphoserine is present on Ser-499. Residues Lys-502 and Gln-562 each participate in a glycyl lysine isopeptide (Lys-Gly) (interchain with G-Cter in SUMO2) cross-link. Residues 579–610 (SSTSVTTTSSHESSTHVSSSSSRSETGVITSS) show a composition bias toward low complexity. Positions 579–621 (SSTSVTTTSSHESSTHVSSSSSRSETGVITSSGSNIPDIISLD) are disordered.

The protein belongs to the PIAS family. As to quaternary structure, binds SUMO1 and UBE2I. Interacts with AXIN1, JUN, MDM2, PARK7, TP53 and TP73 isoform alpha, but not TP73 isoform beta. Interacts with STAT4 following IL12 and IFN-alpha stimulation of T-cells. Interacts also with GTF2I, GTF2IRD1, IKFZ1, DAB2 and MSX2, as well as with several steroid receptors, including ESR1, ESR2, NR3C1, PGR, AR, and with NCOA2. Sumoylation of a target protein seems to enhance the interaction. Binds to sumoylated ELK1. Binds DNA, such as CDKN1A promoter, in a sequence-specific manner. Interacts with PLAG1. Interacts with KLF8; the interaction results in SUMO ligation and repression of KLF8 transcriptional activity and of its cell cycle progression into G(1) phase. PIAS2-beta interacts with IFIH1/MDA5. Isoform PIAS2-alpha interacts with PML (isoform PML-12). Interacts with PRDM1/Blimp-1. In terms of processing, sumoylated. In terms of tissue distribution, mainly expressed in testis. Isoform 3 is expressed predominantly in adult testis, weakly in pancreas, embryonic testis and sperm, and at very low levels in other organs.

It localises to the nucleus speckle. Its subcellular location is the nucleus. It is found in the PML body. It functions in the pathway protein modification; protein sumoylation. Functionally, functions as an E3-type small ubiquitin-like modifier (SUMO) ligase, stabilizing the interaction between UBE2I and the substrate, and as a SUMO-tethering factor. Plays a crucial role as a transcriptional coregulator in various cellular pathways, including the STAT pathway, the p53 pathway and the steroid hormone signaling pathway. The effects of this transcriptional coregulation, transactivation or silencing may vary depending upon the biological context and the PIAS2 isoform studied. However, it seems to be mostly involved in gene silencing. Binds to sumoylated ELK1 and enhances its transcriptional activity by preventing recruitment of HDAC2 by ELK1, thus reversing SUMO-mediated repression of ELK1 transactivation activity. Isoform PIAS2-beta, but not isoform PIAS2-alpha, promotes MDM2 sumoylation. Isoform PIAS2-alpha promotes PARK7 sumoylation. Isoform PIAS2-beta promotes NCOA2 sumoylation more efficiently than isoform PIAS2-alpha. Isoform PIAS2-alpha sumoylates PML at'Lys-65' and 'Lys-160'. The chain is E3 SUMO-protein ligase PIAS2 (PIAS2) from Homo sapiens (Human).